The sequence spans 268 residues: Undecaprenyl-diphosphatase (268 aa).

The next 7 membrane-spanning stretches (helical) occupy residues 41-61 (LAYS…LIYF), 81-101 (WLTY…PLYM), 106-126 (YLLL…AVIF), 146-166 (MTLG…LPGI), 191-211 (FVLV…SEGG), 213-233 (VATP…LVTI), and 245-265 (VTLV…TRIL).

The protein belongs to the UppP family.

It is found in the cell membrane. The enzyme catalyses di-trans,octa-cis-undecaprenyl diphosphate + H2O = di-trans,octa-cis-undecaprenyl phosphate + phosphate + H(+). Catalyzes the dephosphorylation of undecaprenyl diphosphate (UPP). The protein is Undecaprenyl-diphosphatase of Pyrobaculum islandicum (strain DSM 4184 / JCM 9189 / GEO3).